The following is a 321-amino-acid chain: CRISPR system ring nuclease SSO1393 (321 aa).

This sequence belongs to the cOA ring nuclease family. Homodimer. Does not require a metal cofactor. is required as a cofactor.

The protein localises to the cytoplasm. The catalysed reaction is cyclic tetraadenylate = 2 5'-hydroxy-diadenylate 2',3'-cylic phosphate. In terms of biological role, CRISPR (clustered regularly interspaced short palindromic repeat) is an adaptive immune system that provides protection against mobile genetic elements (viruses, transposable elements and conjugative plasmids). CRISPR clusters contain spacers, sequences complementary to antecedent mobile elements, and target invading nucleic acids. CRISPR clusters are transcribed and processed into CRISPR RNA (crRNA). A nuclease that degrades cyclic oligoadenylates (cOA), second messengers that induce an antiviral state important for defense against invading nucleic acids. Destruction of cOA deactivates the Csx1 ribonuclease, preventing uncontrolled degradation of cellular RNA. Slowly degrades cA4 (a tetraadenylate ring) into first a linear tetraadenylate product and secondly into a linear diadenylate product with 5'-OH and 2',3'-cyclic phosphate termini. Is 10-fold less active than SSO2081, suggesting it plays a minor role in cA4 degradation. There may be 2 active sites per homodimer. This Saccharolobus solfataricus (strain ATCC 35092 / DSM 1617 / JCM 11322 / P2) (Sulfolobus solfataricus) protein is CRISPR system ring nuclease SSO1393.